A 206-amino-acid polypeptide reads, in one-letter code: Capsid assembly scaffolding protein (206 aa).

The propeptide occupies 1 to 13; it reads MEENKLKFNLQFF. 3 disordered regions span residues 1 to 50, 83 to 134, and 173 to 206; these read MEEN…PEQQ, AAKL…VDSS, and RQSPLTGGDSFNHSTKNKPQNLAEIARQKRIIKN. Composition is skewed to basic and acidic residues over residues 25–38 and 83–127; these read GDGKKGNPDKKEND and AAKL…KMLS. Residues 173–192 are compositionally biased toward polar residues; it reads RQSPLTGGDSFNHSTKNKPQ. A helix-and-hook motif region spans residues 186–206; it reads STKNKPQNLAEIARQKRIIKN.

As to quaternary structure, found in the procapsid with the major capsid protein in a 2:1 capsid protein:scaffold protein molecular ratio. In terms of processing, the N-terminus is cleaved by ribosomal processing protease Prp.

Functionally, scaffolding protein involved in icosahedric procapsid assembly. Coassembles with capsid protein(s) to form the procapsid. The scaffolding protein is found within the capsid as a series of concentric shells. During DNA packaging, the scaffolding protein molecules are released from the procapsid. This chain is Capsid assembly scaffolding protein, found in Staphylococcus phage 80alpha.